We begin with the raw amino-acid sequence, 347 residues long: Lipoyl synthase (347 aa).

Positions 55, 60, 66, 81, 85, 88, and 292 each coordinate [4Fe-4S] cluster. One can recognise a Radical SAM core domain in the interval 67–281 (WEDREASFLI…SEAAYDMGFP (215 aa)).

The protein belongs to the radical SAM superfamily. Lipoyl synthase family. [4Fe-4S] cluster is required as a cofactor.

Its subcellular location is the cytoplasm. It carries out the reaction [[Fe-S] cluster scaffold protein carrying a second [4Fe-4S](2+) cluster] + N(6)-octanoyl-L-lysyl-[protein] + 2 oxidized [2Fe-2S]-[ferredoxin] + 2 S-adenosyl-L-methionine + 4 H(+) = [[Fe-S] cluster scaffold protein] + N(6)-[(R)-dihydrolipoyl]-L-lysyl-[protein] + 4 Fe(3+) + 2 hydrogen sulfide + 2 5'-deoxyadenosine + 2 L-methionine + 2 reduced [2Fe-2S]-[ferredoxin]. It participates in protein modification; protein lipoylation via endogenous pathway; protein N(6)-(lipoyl)lysine from octanoyl-[acyl-carrier-protein]: step 2/2. Its function is as follows. Catalyzes the radical-mediated insertion of two sulfur atoms into the C-6 and C-8 positions of the octanoyl moiety bound to the lipoyl domains of lipoate-dependent enzymes, thereby converting the octanoylated domains into lipoylated derivatives. The chain is Lipoyl synthase from Corynebacterium urealyticum (strain ATCC 43042 / DSM 7109).